The following is a 150-amino-acid chain: Large ribosomal subunit protein bL9 (150 aa).

The protein belongs to the bacterial ribosomal protein bL9 family.

Functionally, binds to the 23S rRNA. The chain is Large ribosomal subunit protein bL9 from Desulforudis audaxviator (strain MP104C).